The chain runs to 130 residues: Histone H2B (130 aa).

The disordered stretch occupies residues Met-1–Met-31. A Glycyl lysine isopeptide (Lys-Gly) (interchain with G-Cter in ubiquitin) cross-link involves residue Lys-122.

The protein belongs to the histone H2B family. The nucleosome is a histone octamer containing two molecules each of H2A, H2B, H3 and H4 assembled in one H3-H4 heterotetramer and two H2A-H2B heterodimers. The octamer wraps approximately 147 bp of DNA. In terms of processing, monoubiquitinated to form H2BK123ub1. H2BK123ub1 gives a specific tag for epigenetic transcriptional activation and is also prerequisite for H3K4me and H3K79me formation.

The protein localises to the nucleus. The protein resides in the chromosome. In terms of biological role, core component of nucleosome. Nucleosomes wrap and compact DNA into chromatin, limiting DNA accessibility to the cellular machineries which require DNA as a template. Histones thereby play a central role in transcription regulation, DNA repair, DNA replication and chromosomal stability. DNA accessibility is regulated via a complex set of post-translational modifications of histones, also called histone code, and nucleosome remodeling. This is Histone H2B (HTB1) from Encephalitozoon cuniculi (strain GB-M1) (Microsporidian parasite).